The following is a 303-amino-acid chain: Eukaryotic translation initiation factor 3 subunit F (303 aa).

A compositionally biased stretch (polar residues) spans 1–10 (MSLDTSSSAI). Residues 1 to 25 (MSLDTSSSAIHLQLPPTSSSLRPPS) are disordered. Positions 12 to 25 (LQLPPTSSSLRPPS) are enriched in low complexity. One can recognise an MPN domain in the interval 27–165 (ITVHPSVIAQ…VKGWVSQPLG (139 aa)).

Belongs to the eIF-3 subunit F family. Component of the eukaryotic translation initiation factor 3 (eIF-3) complex.

The protein localises to the cytoplasm. Its function is as follows. Component of the eukaryotic translation initiation factor 3 (eIF-3) complex, which is involved in protein synthesis of a specialized repertoire of mRNAs and, together with other initiation factors, stimulates binding of mRNA and methionyl-tRNAi to the 40S ribosome. The eIF-3 complex specifically targets and initiates translation of a subset of mRNAs involved in cell proliferation. This is Eukaryotic translation initiation factor 3 subunit F from Cryptococcus neoformans var. neoformans serotype D (strain B-3501A) (Filobasidiella neoformans).